Consider the following 140-residue polypeptide: Ribosome maturation factor RimP (140 aa).

Belongs to the RimP family.

The protein resides in the cytoplasm. In terms of biological role, required for maturation of 30S ribosomal subunits. This chain is Ribosome maturation factor RimP, found in Campylobacter lari (strain RM2100 / D67 / ATCC BAA-1060).